Here is a 463-residue protein sequence, read N- to C-terminus: UDP-N-acetylmuramoylalanine--D-glutamate ligase (463 aa).

109–115 (GTDGKST) serves as a coordination point for ATP.

Belongs to the MurCDEF family.

Its subcellular location is the cytoplasm. The enzyme catalyses UDP-N-acetyl-alpha-D-muramoyl-L-alanine + D-glutamate + ATP = UDP-N-acetyl-alpha-D-muramoyl-L-alanyl-D-glutamate + ADP + phosphate + H(+). Its pathway is cell wall biogenesis; peptidoglycan biosynthesis. Cell wall formation. Catalyzes the addition of glutamate to the nucleotide precursor UDP-N-acetylmuramoyl-L-alanine (UMA). This is UDP-N-acetylmuramoylalanine--D-glutamate ligase from Leptospira interrogans serogroup Icterohaemorrhagiae serovar copenhageni (strain Fiocruz L1-130).